The chain runs to 163 residues: Thiol peroxidase (163 aa).

The region spanning 16–162 (LQVGDTAHDF…YDAAIAAVKN (147 aa)) is the Thioredoxin domain. Cysteine 58 acts as the Cysteine sulfenic acid (-SOH) intermediate in catalysis. A disulfide bridge connects residues cysteine 58 and cysteine 92.

The protein belongs to the peroxiredoxin family. Tpx subfamily. As to quaternary structure, homodimer.

The enzyme catalyses a hydroperoxide + [thioredoxin]-dithiol = an alcohol + [thioredoxin]-disulfide + H2O. Thiol-specific peroxidase that catalyzes the reduction of hydrogen peroxide and organic hydroperoxides to water and alcohols, respectively. Plays a role in cell protection against oxidative stress by detoxifying peroxides. This chain is Thiol peroxidase, found in Streptococcus gordonii.